The primary structure comprises 89 residues: Protein S100-A8 (89 aa).

2 consecutive EF-hand domains span residues 13–48 and 46–81; these read IDVY…FVQN and VQNI…VGVA. Zn(2+) contacts are provided by H17 and H27. Ca(2+) is bound at residue D33. S-nitrosocysteine is present on C42. Ca(2+) contacts are provided by D59, N61, D63, and E70. Residue H83 participates in Zn(2+) binding.

This sequence belongs to the S-100 family. Homodimer. Preferentially exists as a heterodimer or heterotetramer with S100A9 known as calprotectin (S100A8/A9). Calprotectin (S100A8/9) interacts with CEACAM3 and tubulin filaments in a calcium-dependent manner. Heterotetrameric calprotectin (S100A8/A9) interacts with ANXA6 and associates with tubulin filaments in activated monocytes. S100A8 and calprotectin (S100A8/9) interact with NCF2/P67PHOX, RAC1 and RAC2. Calprotectin (S100A8/9) interacts with CYBA and CYBB. S100A8 interacts with AGER, ATP2A2 and with the heterodimeric complex formed by TLR4 and LY96. Calprotectin (S100A8/9) interacts with NOS2 to form the iNOS-S100A8/A9 transnitrosylase complex. Calprotectin (S100A8/9) interacts with CD69.

The protein resides in the secreted. It localises to the cytoplasm. The protein localises to the cytoskeleton. It is found in the cell membrane. With respect to regulation, calprotectin (S100A8/A9) activity on TLR4 signaling is inhibited by paquinimod. In terms of biological role, S100A8 is a calcium- and zinc-binding protein which plays a prominent role in the regulation of inflammatory processes and immune response. It can induce neutrophil chemotaxis and adhesion. Predominantly found as calprotectin (S100A8/A9) which has a wide plethora of intra- and extracellular functions. The intracellular functions include: facilitating leukocyte arachidonic acid trafficking and metabolism, modulation of the tubulin-dependent cytoskeleton during migration of phagocytes and activation of the neutrophilic NADPH-oxidase. Also participates in regulatory T-cell differentiation together with CD69. Activates NADPH-oxidase by facilitating the enzyme complex assembly at the cell membrane, transferring arachidonic acid, an essential cofactor, to the enzyme complex and S100A8 contributes to the enzyme assembly by directly binding to NCF2/P67PHOX. The extracellular functions involve pro-inflammatory, antimicrobial, oxidant-scavenging and apoptosis-inducing activities. Its pro-inflammatory activity includes recruitment of leukocytes, promotion of cytokine and chemokine production, and regulation of leukocyte adhesion and migration. Acts as an alarmin or a danger associated molecular pattern (DAMP) molecule and stimulates innate immune cells via binding to pattern recognition receptors such as Toll-like receptor 4 (TLR4) and receptor for advanced glycation endproducts (AGER). Binding to TLR4 and AGER activates the MAP-kinase and NF-kappa-B signaling pathways resulting in the amplification of the pro-inflammatory cascade. Has antimicrobial activity towards bacteria and fungi and exerts its antimicrobial activity probably via chelation of Zn(2+) which is essential for microbial growth. Can induce cell death via autophagy and apoptosis and this occurs through the cross-talk of mitochondria and lysosomes via reactive oxygen species (ROS) and the process involves BNIP3. Can regulate neutrophil number and apoptosis by an anti-apoptotic effect; regulates cell survival via ITGAM/ITGB and TLR4 and a signaling mechanism involving MEK-ERK. Its role as an oxidant scavenger has a protective role in preventing exaggerated tissue damage by scavenging oxidants. The iNOS-S100A8/A9 transnitrosylase complex is proposed to direct selective inflammatory stimulus-dependent S-nitrosylation of multiple targets such as GAPDH, ANXA5, EZR, MSN and VIM by recognizing a [IL]-x-C-x-x-[DE] motif; S100A8 seems to contribute to S-nitrosylation site selectivity. (Microbial infection) Upon infection by murine coronavirus (MHV-A59), induces expansion of aberrant immature neutrophils in a TLR4-dependent manner. This chain is Protein S100-A8, found in Mus musculus (Mouse).